The primary structure comprises 406 residues: MSKWKDVKKVVLAYSGGLDTSIILKWLQTELGAEVVTFTADLGQGEELEPARKKAEMLGIKEIFIEDVREEFVRDFVFPMFRANAVYEGVYLLGTSIARPLISKHLIEIARKTGADAIAHGATGKGNDQVRFELSAYALNPDIKIIAPWRDWSFKSRTHLLEFAEQHQIPVAKDKKGEAPFSVDANLLHSSSEGKVLEDPAVEAPEYVHMRTISPETAPDKATIIKIGFEKGDAVSINGERLSPATLLAKLNDYGRDNGIGRLDLVENRFVGMKSRGVYETPGGTILLAAHRAIESITLDRGAAHLKDELMPRYAELIYYGFWFSPEREMLQAAIDHSQRHVEGEVTLKLYKGNVMVIGRESDKSLYSDKLVTFEDDQGAYDQKDAAGFIKLNALRLRTLAARDRK.

Residues 13 to 21 (AYSGGLDTS) and A40 contribute to the ATP site. L-citrulline is bound by residues Y91 and S96. ATP is bound at residue G121. The L-aspartate site is built by T123, N127, and D128. N127 provides a ligand contact to L-citrulline. L-citrulline contacts are provided by R131, S182, S191, E267, and Y279.

Belongs to the argininosuccinate synthase family. Type 1 subfamily. Homotetramer.

The protein localises to the cytoplasm. The enzyme catalyses L-citrulline + L-aspartate + ATP = 2-(N(omega)-L-arginino)succinate + AMP + diphosphate + H(+). It participates in amino-acid biosynthesis; L-arginine biosynthesis; L-arginine from L-ornithine and carbamoyl phosphate: step 2/3. The chain is Argininosuccinate synthase from Brucella anthropi (strain ATCC 49188 / DSM 6882 / CCUG 24695 / JCM 21032 / LMG 3331 / NBRC 15819 / NCTC 12168 / Alc 37) (Ochrobactrum anthropi).